Here is a 1051-residue protein sequence, read N- to C-terminus: Putative transcription factor SEF1 (1051 aa).

Over residues 1–10 (MSTDVSERGA) the composition is skewed to basic and acidic residues. Disordered stretches follow at residues 1–54 (MSTD…SEES) and 67–90 (GQAS…RPVT). Over residues 11 to 21 (EAGSSSGLLSS) the composition is skewed to low complexity. The segment at residues 92-122 (CTHCRQHKIKCNASENFPSSCSRCERMGLQC) is a DNA-binding region (zn(2)-C6 fungal-type). Positions 206–218 (SSVKSSVNTPSGS) are enriched in low complexity. Disordered stretches follow at residues 206 to 227 (SSVK…VDVS), 738 to 759 (EKNR…TEKR), and 927 to 968 (ASGN…QPAP).

The protein localises to the nucleus. Putative transcription factor. This is Putative transcription factor SEF1 (SEF1) from Eremothecium gossypii (strain ATCC 10895 / CBS 109.51 / FGSC 9923 / NRRL Y-1056) (Yeast).